Here is a 159-residue protein sequence, read N- to C-terminus: SsrA-binding protein (159 aa).

A disordered region spans residues 134–159 (KLHDKRETSKERDWNRQKNRLLKERG). Residues 137 to 159 (DKRETSKERDWNRQKNRLLKERG) show a composition bias toward basic and acidic residues.

This sequence belongs to the SmpB family.

The protein resides in the cytoplasm. Its function is as follows. Required for rescue of stalled ribosomes mediated by trans-translation. Binds to transfer-messenger RNA (tmRNA), required for stable association of tmRNA with ribosomes. tmRNA and SmpB together mimic tRNA shape, replacing the anticodon stem-loop with SmpB. tmRNA is encoded by the ssrA gene; the 2 termini fold to resemble tRNA(Ala) and it encodes a 'tag peptide', a short internal open reading frame. During trans-translation Ala-aminoacylated tmRNA acts like a tRNA, entering the A-site of stalled ribosomes, displacing the stalled mRNA. The ribosome then switches to translate the ORF on the tmRNA; the nascent peptide is terminated with the 'tag peptide' encoded by the tmRNA and targeted for degradation. The ribosome is freed to recommence translation, which seems to be the essential function of trans-translation. This chain is SsrA-binding protein, found in Rhizobium meliloti (strain 1021) (Ensifer meliloti).